The chain runs to 428 residues: MEILMASSNLIKQLQERGLVAQVTDEEALAERLAQGPIALYCGFDPTADSLHLGHLVPLLCLKRFQQAGHKPVALVGGATGLIGDPSFKAAERKLNTEETVQEWVDKIRKQVAPFLDFDCGENSAIAANNYDWFGNMNVLTFLRDIGKHFSVNQMINKEAVKQRLNREDQGISFTEFSYNLLQGYDFACLNKQYGVVLQIGGSDQWGNITSGIDLTRRLHQNQVFGLTVPLITKADGTKFGKTEGGAVWLDPKKTSPYKFYQFWINTADADVYRFLKFFTFMSIEEINALEEEDKNSGKAPRAQYVLAEQVTRLVHGEDGLQAAKRITECLFSGSLSALSEADFEQLAQDGVPMVEMEKGADLMQALVDSELQPSRGQARKTIASNAITINGEKQSDPEYFFKEEDRLFGRFTLLRRGKKNYCLICWK.

Tyr-41 is a binding site for L-tyrosine. The 'HIGH' region signature appears at 46–55 (PTADSLHLGH). Residue Lys-148 is modified to N6-acetyllysine. The L-tyrosine site is built by Tyr-179 and Gln-183. The short motif at 239 to 243 (KFGKT) is the 'KMSKS' region element. Lys-242 is a binding site for ATP. Residues 361 to 418 (ADLMQALVDSELQPSRGQARKTIASNAITINGEKQSDPEYFFKEEDRLFGRFTLLRRG) enclose the S4 RNA-binding domain.

This sequence belongs to the class-I aminoacyl-tRNA synthetase family. TyrS type 1 subfamily. As to quaternary structure, homodimer.

It is found in the cytoplasm. It catalyses the reaction tRNA(Tyr) + L-tyrosine + ATP = L-tyrosyl-tRNA(Tyr) + AMP + diphosphate + H(+). Its function is as follows. Catalyzes the attachment of tyrosine to tRNA(Tyr) in a two-step reaction: tyrosine is first activated by ATP to form Tyr-AMP and then transferred to the acceptor end of tRNA(Tyr). The protein is Tyrosine--tRNA ligase of Escherichia coli O1:K1 / APEC.